The primary structure comprises 797 residues: Ribosome biogenesis protein BOP1 homolog (797 aa).

Disordered regions lie at residues 22 to 112 and 149 to 177; these read LVPS…GGGP and SICA…RNTV. Low complexity predominate over residues 61-73; it reads AGAAAAAVEGTAA. Over residues 74–87 the composition is skewed to acidic residues; it reads PEDEAADNSSEEDA. The segment covering 90–112 has biased composition (gly residues); sequence GSHGEGAGEGGGSGTWPGNGGGP. WD repeat units lie at residues 462 to 502, 504 to 544, 581 to 623, 626 to 664, 667 to 706, 710 to 749, and 766 to 797; these read GHMG…CWRT, VLEG…EEAE, RLRF…SQNP, KNRG…LAKK, GGGG…KPYK, YHSA…DLLT, and TASE…LYCN.

Belongs to the WD repeat BOP1/ERB1 family.

It localises to the nucleus. The protein resides in the nucleolus. The protein localises to the nucleoplasm. In terms of biological role, required for maturation of ribosomal RNAs and formation of the large ribosomal subunit. In Chlamydomonas reinhardtii (Chlamydomonas smithii), this protein is Ribosome biogenesis protein BOP1 homolog.